A 92-amino-acid chain; its full sequence is MENIISLLALKNDPTSATTGAGLVAVGAGLASIGNFGTGLGQGLSAGRAAEAVGRNPEAIKKIRSLMIIGMAISESASLYSFIIAILLVFVY.

Helical transmembrane passes span 20–40 and 71–91; these read GAGLVAVGAGLASIGNFGTGL and MAISESASLYSFIIAILLVFV.

Belongs to the ATPase C chain family. As to quaternary structure, F-type ATPases have 2 components, F(1) - the catalytic core - and F(0) - the membrane proton channel. F(1) has five subunits: alpha(3), beta(3), gamma(1), delta(1), epsilon(1). F(0) has three main subunits: a(1), b(2) and c(10-14). The alpha and beta chains form an alternating ring which encloses part of the gamma chain. F(1) is attached to F(0) by a central stalk formed by the gamma and epsilon chains, while a peripheral stalk is formed by the delta and b chains.

The protein localises to the cell membrane. Functionally, f(1)F(0) ATP synthase produces ATP from ADP in the presence of a proton or sodium gradient. F-type ATPases consist of two structural domains, F(1) containing the extramembraneous catalytic core and F(0) containing the membrane proton channel, linked together by a central stalk and a peripheral stalk. During catalysis, ATP synthesis in the catalytic domain of F(1) is coupled via a rotary mechanism of the central stalk subunits to proton translocation. Key component of the F(0) channel; it plays a direct role in translocation across the membrane. A homomeric c-ring of between 10-14 subunits forms the central stalk rotor element with the F(1) delta and epsilon subunits. The sequence is that of ATP synthase subunit c from Mycoplasmopsis pulmonis (strain UAB CTIP) (Mycoplasma pulmonis).